A 136-amino-acid chain; its full sequence is MQFSTVASIAAIAAVASAASNITTATVTEESTTLVTITSCEDHVCSETVSPALVSTATVTVNDVITQYTTWCPLPTTEAPKNTTSPAPTEKPTEKPTEKPTQQGSSTQTVTSYTGAAVKALPAAGALLAGAAALLL.

A signal peptide spans 1-18; the sequence is MQFSTVASIAAIAAVASA. N-linked (GlcNAc...) asparagine glycans are attached at residues Asn21 and Asn82. Residues 73-110 are disordered; sequence PLPTTEAPKNTTSPAPTEKPTEKPTEKPTQQGSSTQTV. Low complexity predominate over residues 99–110; the sequence is KPTQQGSSTQTV. A lipid anchor (GPI-anchor amidated glycine) is attached at Gly115. A propeptide spans 116-136 (removed in mature form); the sequence is AAVKALPAAGALLAGAAALLL.

It belongs to the PGA59 family. The GPI-anchor is attached to the protein in the endoplasmic reticulum and serves to target the protein to the cell surface. There, the glucosamine-inositol phospholipid moiety is cleaved off and the GPI-modified mannoprotein is covalently attached via its lipidless GPI glycan remnant to the 1,6-beta-glucan of the outer cell wall layer.

The protein localises to the secreted. The protein resides in the cell wall. Its subcellular location is the membrane. In terms of biological role, cell wall protein necessary for cell wall integrity. This chain is Putative covalently bound cell wall protein 22 (CCW22), found in Saccharomyces cerevisiae (strain ATCC 204508 / S288c) (Baker's yeast).